We begin with the raw amino-acid sequence, 200 residues long: Imidazoleglycerol-phosphate dehydratase (200 aa).

Substrate is bound by residues Glu13, 39 to 47 (HMLTLLTFH), 68 to 72 (HHLIE), Arg94, and Arg116. Mn(2+) contacts are provided by His39, His68, His69, and Glu72. Glu141, His165, His166, and Glu169 together coordinate Mn(2+). Residues 165–173 (HHIIEGMFK) and 195–197 (SSK) each bind substrate.

This sequence belongs to the imidazoleglycerol-phosphate dehydratase family. It depends on Mn(2+) as a cofactor.

The protein resides in the cytoplasm. It catalyses the reaction D-erythro-1-(imidazol-4-yl)glycerol 3-phosphate = 3-(imidazol-4-yl)-2-oxopropyl phosphate + H2O. It participates in amino-acid biosynthesis; L-histidine biosynthesis; L-histidine from 5-phospho-alpha-D-ribose 1-diphosphate: step 6/9. This is Imidazoleglycerol-phosphate dehydratase (hisB) from Lactococcus lactis subsp. lactis (strain IL1403) (Streptococcus lactis).